The following is a 295-amino-acid chain: Acetylglutamate kinase (295 aa).

Substrate contacts are provided by residues 66 to 67, R88, and N193; that span reads GG.

Belongs to the acetylglutamate kinase family. ArgB subfamily.

It localises to the cytoplasm. It catalyses the reaction N-acetyl-L-glutamate + ATP = N-acetyl-L-glutamyl 5-phosphate + ADP. Its pathway is amino-acid biosynthesis; L-arginine biosynthesis; N(2)-acetyl-L-ornithine from L-glutamate: step 2/4. Its function is as follows. Catalyzes the ATP-dependent phosphorylation of N-acetyl-L-glutamate. This chain is Acetylglutamate kinase, found in Rhizobium etli (strain ATCC 51251 / DSM 11541 / JCM 21823 / NBRC 15573 / CFN 42).